The sequence spans 154 residues: Ribonuclease HI (154 aa).

The RNase H type-1 domain maps to 1–142; the sequence is MTKHVEIFTD…CDELARTAAE (142 aa). 4 residues coordinate Mg(2+): aspartate 10, glutamate 48, aspartate 70, and aspartate 134.

The protein belongs to the RNase H family. In terms of assembly, monomer. The cofactor is Mg(2+).

Its subcellular location is the cytoplasm. The catalysed reaction is Endonucleolytic cleavage to 5'-phosphomonoester.. In terms of biological role, endonuclease that specifically degrades the RNA of RNA-DNA hybrids. The polypeptide is Ribonuclease HI (Vibrio parahaemolyticus serotype O3:K6 (strain RIMD 2210633)).